Here is a 185-residue protein sequence, read N- to C-terminus: Ribosome-recycling factor (185 aa).

This sequence belongs to the RRF family.

It is found in the cytoplasm. Responsible for the release of ribosomes from messenger RNA at the termination of protein biosynthesis. May increase the efficiency of translation by recycling ribosomes from one round of translation to another. This Pseudomonas fluorescens (strain ATCC BAA-477 / NRRL B-23932 / Pf-5) protein is Ribosome-recycling factor.